Reading from the N-terminus, the 257-residue chain is UPF0246 protein LPC_0782 (257 aa).

The protein belongs to the UPF0246 family.

This chain is UPF0246 protein LPC_0782, found in Legionella pneumophila (strain Corby).